The sequence spans 496 residues: Glutamyl-tRNA(Gln) amidotransferase subunit A (496 aa).

Residues K75 and S150 each act as charge relay system in the active site. S174 acts as the Acyl-ester intermediate in catalysis.

Belongs to the amidase family. GatA subfamily. As to quaternary structure, heterotrimer of A, B and C subunits.

It carries out the reaction L-glutamyl-tRNA(Gln) + L-glutamine + ATP + H2O = L-glutaminyl-tRNA(Gln) + L-glutamate + ADP + phosphate + H(+). Allows the formation of correctly charged Gln-tRNA(Gln) through the transamidation of misacylated Glu-tRNA(Gln) in organisms which lack glutaminyl-tRNA synthetase. The reaction takes place in the presence of glutamine and ATP through an activated gamma-phospho-Glu-tRNA(Gln). This chain is Glutamyl-tRNA(Gln) amidotransferase subunit A, found in Burkholderia vietnamiensis (strain G4 / LMG 22486) (Burkholderia cepacia (strain R1808)).